A 443-amino-acid chain; its full sequence is Elongation factor 1-alpha (443 aa).

Residues 5–228 enclose the tr-type G domain; that stretch reads KTHINLVVIG…DTMQPPKRPY (224 aa). A G1 region spans residues 14-21; that stretch reads GHVDSGKS. Residue 14–21 coordinates GTP; the sequence is GHVDSGKS. The interval 70–74 is G2; that stretch reads GITID. The tract at residues 91 to 94 is G3; the sequence is DAPG. GTP-binding positions include 91–95 and 153–156; these read DAPGH and NKMD. The segment at 153-156 is G4; sequence NKMD. Residues 192 to 194 are G5; the sequence is SGF.

It belongs to the TRAFAC class translation factor GTPase superfamily. Classic translation factor GTPase family. EF-Tu/EF-1A subfamily.

The protein resides in the cytoplasm. Its function is as follows. This protein promotes the GTP-dependent binding of aminoacyl-tRNA to the A-site of ribosomes during protein biosynthesis. This is Elongation factor 1-alpha (MEF-1) from Plasmodium falciparum (isolate K1 / Thailand).